A 241-amino-acid polypeptide reads, in one-letter code: 1-(5-phosphoribosyl)-5-[(5-phosphoribosylamino)methylideneamino] imidazole-4-carboxamide isomerase (241 aa).

Asp-11 serves as the catalytic Proton acceptor. The active-site Proton donor is Asp-130.

It belongs to the HisA/HisF family.

The protein localises to the cytoplasm. It catalyses the reaction 1-(5-phospho-beta-D-ribosyl)-5-[(5-phospho-beta-D-ribosylamino)methylideneamino]imidazole-4-carboxamide = 5-[(5-phospho-1-deoxy-D-ribulos-1-ylimino)methylamino]-1-(5-phospho-beta-D-ribosyl)imidazole-4-carboxamide. It functions in the pathway amino-acid biosynthesis; L-histidine biosynthesis; L-histidine from 5-phospho-alpha-D-ribose 1-diphosphate: step 4/9. This Acidothermus cellulolyticus (strain ATCC 43068 / DSM 8971 / 11B) protein is 1-(5-phosphoribosyl)-5-[(5-phosphoribosylamino)methylideneamino] imidazole-4-carboxamide isomerase.